A 1304-amino-acid polypeptide reads, in one-letter code: MAIVKRGVRTKNKQSQQPSKSGIKKAEFDLHKKKEVGVSDLTLLSKIADDAINDNLYKRFMNSTIYTYIGHVLISVNPFEDLGIYTPEHLNKYKGKNRLEVPPHVFAIAESMYYNLKSYGDNQCVIISGESGAGKTEAAKQIMQYIANVSVDDQVSAGGDGGISKIKDMVLATNPLLESFGCAKTLRNNNSSRHGKYLEIYFNPSNYQPVSAHITNYLLEKQRVVSQITNERNFHIFYQFTKHCPPQYQQSFGIQGPETYVYTSAAKCINVDGVDDSKDLQDTLRAMQVIGLSQDEQDNIFRMLASILWVGNVSFVEDDNGNAAVRDESVTAFIAYLLDVDAETLKTSLIQRVMQTSHGMRRGSTYHVPLNIVQATSVRDALAKGIYNNLFDWIVERVNLSLQGSGAVQEKKSIGILDIYGFEIFEHNSFEQICINYVNEKLQQTFIQLTLKAEQDEYVQEQIKWTPIDYFNNKVVCDLIEALRPQPGLFAALNDSVKTAHADSDAADQVFAQRLSMVGANNAHFEDRRGKFIIKHYAGDVTYDVAGMTDKNKDSMLRDLVEVLSTSSNSFVSQVLFPPDLLAALTDSKKRPETASDKIKKSANLLVDTLSQCQPSYIRTIKPNQTKRPKEYDNNQVLHQIKYLGLKENVRIRRAGFAYRTTFDKFVQRFYLLSPKTGYAGDYIWQGDDVTAVHEILRSCHIPDSEYQMGTTKVFIKTPETLFALEDMRDKYWHNMAARIQRAWRRYIKRKDDAARLIQSAWKNKTHGNQFEQLRDYGNGLLHGRKERRRMSMLGSRAFMGDYLGCKYSSGFGRFIMSQAGISDSVIFSAKGDILLSKFGRSSKRLSRIFILTKNSLYVIAQTLVQNRLQVQKEFTIPVSGINYVGLSIYQDNWVAVSLHSPTPTTPDIFINLDFKTELVTHLKKCNPGLNIKIGQTIEYQKKPGKFHTIKFIVGNTAPVNGDSYKSGTVTVRQGLPGNSQNPKRPRGAAGKVDYSKYYNRGSNMRSTSSYQPPAVSKAPQSSRPSYIQPPVQQTQQRVVPPVQSQPKPQAQRYAPPDTQPQTQRHAPPDTQPHAHPEQAAQAAQAAFHHTAPQAQNTTQRKVPPSAPGSYGQQAPTQKPSAPSRPARKTAPAPPAKKNVAPPPPPAAASPPPKPKFPTYKAAYDFQGTGSASELPISKETIVFITRKEDNGWWLAKTLDETKEGWVPAAYVVECDPPANSPAGNAKSPPPPPPQLNSASQAQQSQQQAQAPNGAGLSNGLADALKAKKSEETNLAGSLADALKKRKGATGDSDEEDEEDDDDW.

Residues 1–12 show a composition bias toward basic residues; sequence MAIVKRGVRTKN. Residues 1-24 form a disordered region; it reads MAIVKRGVRTKNKQSQQPSKSGIK. Residues 36–730 enclose the Myosin motor domain; sequence VGVSDLTLLS…TLFALEDMRD (695 aa). An ATP-binding site is contributed by 129-136; the sequence is GESGAGKT. Ser364 carries the phosphoserine modification. The actin-binding stretch occupies residues 413 to 496; it reads SIGILDIYGF…PGLFAALNDS (84 aa). IQ domains follow at residues 734–754 and 755–780; these read HNMA…KDDA and ARLI…YGNG. One can recognise a TH1 domain in the interval 788-978; it reads RRRMSMLGSR…TVTVRQGLPG (191 aa). 2 disordered regions span residues 963-1162 and 1214-1304; these read DSYK…TYKA and ECDP…DDDW. Composition is skewed to polar residues over residues 964–983 and 1001–1012; these read SYKS…SQNP and RGSNMRSTSSYQ. Composition is skewed to low complexity over residues 1029 to 1052, 1072 to 1096, and 1120 to 1140; these read QPPV…PQAQ, QPHA…PQAQ, and PSAP…KKNV. Residues 1141 to 1156 show a composition bias toward pro residues; sequence APPPPPAAASPPPKPK. The region spanning 1155-1217 is the SH3 domain; the sequence is PKFPTYKAAY…PAAYVVECDP (63 aa). 2 stretches are compositionally biased toward low complexity: residues 1217–1227 and 1236–1256; these read PPANSPAGNAK and LNSA…NGAG. Positions 1292-1304 are enriched in acidic residues; the sequence is DSDEEDEEDDDDW.

The protein belongs to the TRAFAC class myosin-kinesin ATPase superfamily. Myosin family. Phosphorylation of the TEDS site (Ser-364) is required for the polarization of the actin cytoskeleton. Phosphorylation probably activates the myosin-I ATPase activity.

It is found in the cytoplasm. The protein localises to the cytoskeleton. The protein resides in the actin patch. Its function is as follows. Type-I myosin implicated in the organization of the actin cytoskeleton. Required for proper actin cytoskeleton polarization. At the cell cortex, assembles in patch-like structures together with proteins from the actin-polymerizing machinery and promotes actin assembly. Functions as actin nucleation-promoting factor (NPF) for the Arp2/3 complex. This chain is Myosin-1 (MYO1), found in Debaryomyces hansenii (strain ATCC 36239 / CBS 767 / BCRC 21394 / JCM 1990 / NBRC 0083 / IGC 2968) (Yeast).